The chain runs to 218 residues: Protein THO1 (218 aa).

The 35-residue stretch at 4-38 folds into the SAP domain; that stretch reads YSSLTVVQLKDLLTKRNLSVGGLKNELVQRLIKDD. The residue at position 22 (Ser22) is a Phosphoserine. Disordered regions lie at residues 37–123 and 177–218; these read DDEE…LSPE and LVSR…GYRR. A compositionally biased stretch (polar residues) spans 47–57; that stretch reads VSPQEQNQEQG. Ser58 and Ser68 each carry phosphoserine. Residues 72 to 96 show a composition bias toward basic and acidic residues; the sequence is TEKKEVSSEPKETNEPKEENKDVQK. Composition is skewed to low complexity over residues 102-122 and 186-203; these read SATA…ALSP and SGNN…NNRS. Basic residues predominate over residues 204 to 218; the sequence is RVSKNRRGNRSGYRR.

It belongs to the SAP domain-containing ribonucleoprotein family. As to quaternary structure, interacts with SUB2 in the presence of RNA; this interaction facilitates RNA binding of SUB2.

Facilitates RNA binding of SUB2 and likely plays a role in mRNA export. Suppressor of the transcriptional defect of HPR1 by overexpression. In Saccharomyces cerevisiae (strain ATCC 204508 / S288c) (Baker's yeast), this protein is Protein THO1 (THO1).